A 432-amino-acid chain; its full sequence is Adenylosuccinate synthetase (432 aa).

GTP is bound by residues 13–19 (GDEGKGK) and 41–43 (GHT). The active-site Proton acceptor is the aspartate 14. 2 residues coordinate Mg(2+): aspartate 14 and glycine 41. IMP is bound by residues 14 to 17 (DEGK), 39 to 42 (NAGH), threonine 131, arginine 145, glutamine 226, threonine 241, and arginine 305. Histidine 42 acts as the Proton donor in catalysis. Residue 301-307 (SVTGRAR) coordinates substrate. GTP-binding positions include arginine 307, 333-335 (KLD), and 416-418 (STG).

This sequence belongs to the adenylosuccinate synthetase family. In terms of assembly, homodimer. It depends on Mg(2+) as a cofactor.

It is found in the cytoplasm. The catalysed reaction is IMP + L-aspartate + GTP = N(6)-(1,2-dicarboxyethyl)-AMP + GDP + phosphate + 2 H(+). It functions in the pathway purine metabolism; AMP biosynthesis via de novo pathway; AMP from IMP: step 1/2. Its function is as follows. Plays an important role in the de novo pathway of purine nucleotide biosynthesis. Catalyzes the first committed step in the biosynthesis of AMP from IMP. This chain is Adenylosuccinate synthetase, found in Neisseria meningitidis serogroup A / serotype 4A (strain DSM 15465 / Z2491).